The primary structure comprises 343 residues: 4-hydroxy-2-oxovalerate aldolase 1 (343 aa).

Positions 8 to 260 (VTVHDMTLRD…ETGVDVAKIT (253 aa)) constitute a Pyruvate carboxyltransferase domain. 16–17 (RD) contacts substrate. Aspartate 17 lines the Mn(2+) pocket. Histidine 20 functions as the Proton acceptor in the catalytic mechanism. Residues serine 170 and histidine 199 each contribute to the substrate site. Mn(2+)-binding residues include histidine 199 and histidine 201. Tyrosine 290 contacts substrate.

The protein belongs to the 4-hydroxy-2-oxovalerate aldolase family.

It catalyses the reaction (S)-4-hydroxy-2-oxopentanoate = acetaldehyde + pyruvate. The sequence is that of 4-hydroxy-2-oxovalerate aldolase 1 from Dechloromonas aromatica (strain RCB).